A 368-amino-acid polypeptide reads, in one-letter code: Agmatine deiminase (368 aa).

Cys357 (amidino-cysteine intermediate) is an active-site residue.

The protein belongs to the agmatine deiminase family. As to quaternary structure, homodimer.

It carries out the reaction agmatine + H2O = N-carbamoylputrescine + NH4(+). The protein operates within amine and polyamine biosynthesis; putrescine biosynthesis via agmatine pathway; N-carbamoylputrescine from agmatine: step 1/1. Functionally, mediates the hydrolysis of agmatine into N-carbamoylputrescine in the arginine decarboxylase (ADC) pathway of putrescine biosynthesis, a basic polyamine. This is Agmatine deiminase from Stutzerimonas stutzeri (strain A1501) (Pseudomonas stutzeri).